Here is a 2255-residue protein sequence, read N- to C-terminus: Defense against restriction protein B (2255 aa).

The Helicase ATP-binding domain occupies 841–1126; that stretch reads VRRLSEDGRG…YNMLSHVLPK (286 aa). An ATP-binding site is contributed by 854 to 861; it reads FGTGLGKT. A DEAH box motif is present at residues 1052-1055; sequence DEGH. A coiled-coil region spans residues 1198-1234; sequence ELDEHQQDAPLTEEQLAAYEELRQQAEAAAKANNGVT. In terms of domain architecture, Helicase C-terminal spans 1383–1568; that stretch reads KLKRIICNAL…EMENADANDM (186 aa). The stretch at 1617 to 1654 forms a coiled coil; that stretch reads HAAGEDVEVLTAELERSKAELEKTTAEVAKFKQAVMAK.

This sequence belongs to the helicase family.

It is found in the virion. Functionally, capsid internal protein that is probably ejected along with the viral DNA and prevents degradation of viral DNA by the host EcoB and EcoK restriction-modification antiviral defense systems. In Escherichia phage P1 (Bacteriophage P1), this protein is Defense against restriction protein B.